The primary structure comprises 277 residues: Bis(5'-nucleosyl)-tetraphosphatase, symmetrical (277 aa).

The protein belongs to the Ap4A hydrolase family.

The catalysed reaction is P(1),P(4)-bis(5'-adenosyl) tetraphosphate + H2O = 2 ADP + 2 H(+). In terms of biological role, hydrolyzes diadenosine 5',5'''-P1,P4-tetraphosphate to yield ADP. The sequence is that of Bis(5'-nucleosyl)-tetraphosphatase, symmetrical from Methylobacillus flagellatus (strain ATCC 51484 / DSM 6875 / VKM B-1610 / KT).